The following is a 396-amino-acid chain: Elongation factor Tu (396 aa).

The region spanning Lys-10–Val-206 is the tr-type G domain. The segment at Gly-19–Thr-26 is G1. GTP is bound at residue Gly-19–Thr-26. Thr-26 serves as a coordination point for Mg(2+). The interval Thr-60–Thr-64 is G2. The tract at residues Asp-83–Gly-86 is G3. GTP contacts are provided by residues Asp-83–His-87 and Asn-138–Asp-141. The tract at residues Asn-138–Asp-141 is G4. The segment at Ala-176 to Leu-178 is G5.

Belongs to the TRAFAC class translation factor GTPase superfamily. Classic translation factor GTPase family. EF-Tu/EF-1A subfamily. In terms of assembly, monomer.

The protein resides in the cytoplasm. The enzyme catalyses GTP + H2O = GDP + phosphate + H(+). Its function is as follows. GTP hydrolase that promotes the GTP-dependent binding of aminoacyl-tRNA to the A-site of ribosomes during protein biosynthesis. The chain is Elongation factor Tu from Sorangium cellulosum (strain So ce56) (Polyangium cellulosum (strain So ce56)).